A 534-amino-acid polypeptide reads, in one-letter code: Cyclin-L1 (534 aa).

Cyclin-like regions lie at residues 94–196 and 209–293; these read ELIQ…RVLK and KIIV…KILQ. The segment at 327 to 534 is disordered; that stretch reads LPEGAPVLDN…DHPGHSRHRR (208 aa). The segment covering 389–399 has biased composition (basic and acidic residues); the sequence is KGRESRSRSGS. Composition is skewed to low complexity over residues 400–412 and 437–453; these read RDQSYSRSPSRSA and RSGSPPRQFNHSSTYKS. The interval 400-436 is RS; it reads RDQSYSRSPSRSASPKHRKSESYSTSSGSKSHSRSRS. Residues 468 to 485 are compositionally biased toward basic residues; that stretch reads SAHKARKSRSRSSSRSRS. The span at 486-495 shows a compositional bias: basic and acidic residues; the sequence is RSRERSDHSG. The segment covering 496 to 511 has biased composition (basic residues); that stretch reads KYKKKSHYYRNHRHER. The segment covering 512–528 has biased composition (basic and acidic residues); the sequence is SRSYERASHRYDRDHPG.

This sequence belongs to the cyclin family. Cyclin L subfamily.

The protein resides in the nucleus speckle. It localises to the nucleus. Its subcellular location is the nucleoplasm. Its function is as follows. Involved in pre-mRNA splicing. The sequence is that of Cyclin-L1 (CCNL1) from Gallus gallus (Chicken).